Consider the following 82-residue polypeptide: P2Y purinoceptor 2 (82 aa).

A helical transmembrane segment spans residues 1–25 (LPLSYGVVCVLGLCLNVVALYIFLC). Over 26 to 35 (RLKTWNASTT) the chain is Cytoplasmic. A helical transmembrane segment spans residues 36–56 (YMFHLAVSDSLYAASLPLLVY). Residues 57-75 (YYAQGDHWPFSTVLCKLVR) are Extracellular-facing. Residues 76-82 (FLFYTNL) form a helical membrane-spanning segment.

This sequence belongs to the G-protein coupled receptor 1 family. In terms of tissue distribution, expressed in brain, heart, stria vascularis and vestibular labyrinth.

It is found in the cell membrane. Functionally, receptor for ATP and UTP coupled to G-proteins that activate a phosphatidylinositol-calcium second messenger system. Not activated by UDP. This is P2Y purinoceptor 2 (P2RY2) from Meriones unguiculatus (Mongolian jird).